The chain runs to 436 residues: Histidine--tRNA ligase (436 aa).

It belongs to the class-II aminoacyl-tRNA synthetase family. Homodimer.

The protein resides in the cytoplasm. The catalysed reaction is tRNA(His) + L-histidine + ATP = L-histidyl-tRNA(His) + AMP + diphosphate + H(+). This chain is Histidine--tRNA ligase, found in Psychrobacter sp. (strain PRwf-1).